Consider the following 553-residue polypeptide: Neutral amino acid transporter B(0) (553 aa).

Met-1 is modified (N-acetylmethionine). Over 1–50 the chain is Cytoplasmic; the sequence is MAVDPPKADPKGVAVDSSRRCPALGSREDQSAKAGGCCGSRDRVRRCIRA. A helical membrane pass occupies residues 51–80; that stretch reads NLLVLLTVAAVVAGVGLGLGVSAAGGADAL. Topologically, residues 81–93 are extracellular; it reads GPARLTRFAFPGE. The helical transmembrane segment at 94-115 threads the bilayer; the sequence is LLLRLLKMIILPLVVCSLIGGA. Residues 116 to 129 are Cytoplasmic-facing; sequence ASLDPSALGRVGAW. The helical transmembrane segment at 130–152 threads the bilayer; sequence ALLFFLVTTLLASALGVGLALAL. The Extracellular segment spans residues 153–236; sequence KPGAAVTAIT…INSTMVQLLC (84 aa). N-linked (GlcNAc...) asparagine glycans are attached at residues Asn-165 and Asn-228. The helical transmembrane segment at 237-260 threads the bilayer; sequence EVEGMNILGLVVFAIVFGVALRKL. Residues 261–269 are Cytoplasmic-facing; that stretch reads GPEGELLIR. Residues 270–297 traverse the membrane as a helical segment; it reads FFNSFNDATMVLVSWIMWYAPVGILFLV. Over 298-318 the chain is Extracellular; sequence ASKIVEMKDVRQLFISLGKYI. Residues 319–340 traverse the membrane as a helical segment; sequence LCCLLGHAIHGLLVLPLIYFLF. Over 341 to 345 the chain is Cytoplasmic; sequence TRKNP. Positions 346-376 form an intramembrane region, discontinuously helical; it reads YRFLWGIMTPLATAFGTSSSSATLPLMMKCV. The Cytoplasmic segment spans residues 377-385; it reads EEKNGVAKH. Residues 386–412 traverse the membrane as a helical segment; the sequence is ISRFILPIGATVNMDGAALFQCVAAVF. Residues Gly-394, Thr-396, and Asn-398 each coordinate Na(+). At 413–425 the chain is on the extracellular side; the sequence is IAQLNGVSLDFVK. Residues 426-459 constitute an intramembrane region (discontinuously helical); the sequence is IITILVTATASSVGAAGIPAGGVLTLAIILEAVS. Residues 460–472 lie on the Extracellular side of the membrane; that stretch reads LPVKDISLILAVD. A helical membrane pass occupies residues 473–494; it reads WLVDRSCTVLNVEGDAFGAGLL. Na(+) contacts are provided by Asn-483 and Asp-487. The Cytoplasmic portion of the chain corresponds to 495–553; the sequence is QSYVDRTKMPSSEPELIQVKNEVSLNPLPLATEEGNPLLKQYQGPTGDSSATFEKESVM. Ser-505, Ser-506, Ser-518, Ser-543, and Ser-551 each carry phosphoserine. Positions 531–553 are disordered; the sequence is PLLKQYQGPTGDSSATFEKESVM. Polar residues predominate over residues 537 to 546; sequence QGPTGDSSAT.

It belongs to the dicarboxylate/amino acid:cation symporter (DAACS) (TC 2.A.23) family. SLC1A5 subfamily. Homotrimer. As to expression, highly expressed in adipose tissue. Detected in lung, skeletal muscle, large intestine, kidney and testis. Expressed in lung, brain, kidney and neural retina (at protein level). Expressed in Mueller cells (at protein level).

The protein resides in the cell membrane. It is found in the melanosome. It carries out the reaction L-glutamine(out) + L-serine(in) + Na(+)(out) = L-glutamine(in) + L-serine(out) + Na(+)(in). It catalyses the reaction L-glutamine(in) + L-serine(out) + Na(+)(out) = L-glutamine(out) + L-serine(in) + Na(+)(in). The catalysed reaction is L-threonine(in) + L-glutamine(out) + Na(+)(out) = L-threonine(out) + L-glutamine(in) + Na(+)(in). The enzyme catalyses L-threonine(out) + L-glutamine(in) + Na(+)(out) = L-threonine(in) + L-glutamine(out) + Na(+)(in). It carries out the reaction L-asparagine(in) + L-glutamine(out) + Na(+)(out) = L-asparagine(out) + L-glutamine(in) + Na(+)(in). It catalyses the reaction L-asparagine(out) + L-glutamine(in) + Na(+)(out) = L-asparagine(in) + L-glutamine(out) + Na(+)(in). The catalysed reaction is L-glutamine(in) + L-alanine(out) + Na(+)(out) = L-glutamine(out) + L-alanine(in) + Na(+)(in). The enzyme catalyses L-valine(out) + L-glutamine(in) + Na(+)(out) = L-valine(in) + L-glutamine(out) + Na(+)(in). It carries out the reaction L-glutamine(in) + L-methionine(out) + Na(+)(out) = L-glutamine(out) + L-methionine(in) + Na(+)(in). It catalyses the reaction L-glutamine(in) + L-glutamate(out) + Na(+)(out) + H(+)(out) = L-glutamine(out) + L-glutamate(in) + Na(+)(in) + H(+)(in). The catalysed reaction is D-serine(in) + L-glutamine(out) + Na(+)(out) = D-serine(out) + L-glutamine(in) + Na(+)(in). The enzyme catalyses D-serine(in) + L-alanine(out) + Na(+)(out) = D-serine(out) + L-alanine(in) + Na(+)(in). It carries out the reaction nitrate(in) = nitrate(out). It catalyses the reaction iodide(out) = iodide(in). The catalysed reaction is thiocyanate(in) = thiocyanate(out). Its activity is regulated as follows. Down-regulated at acidic pH, with the exception of L-glutamate transport which is up-regulated instead. Functionally, sodium-coupled antiporter of neutral amino acids. In a tri-substrate transport cycle, exchanges neutral amino acids between the extracellular and intracellular compartments, coupled to the inward cotransport of at least one sodium ion. The preferred substrate is the essential amino acid L-glutamine, a precursor for biosynthesis of proteins, nucleotides and amine sugars as well as an alternative fuel for mitochondrial oxidative phosphorylation. Exchanges L-glutamine with other neutral amino acids such as L-serine, L-threonine and L-asparagine in a bidirectional way. Provides L-glutamine to proliferating stem and activated cells driving the metabolic switch toward cell differentiation. The transport cycle is usually pH-independent, with the exception of L-glutamate. Transports extracellular L-glutamate coupled to the cotransport of one proton and one sodium ion in exchange for intracellular L-glutamine counter-ion. May provide for L-glutamate uptake in glial cells regulating glutamine/glutamate cycle in the nervous system. Can transport D-amino acids. Mediates D-serine release from the retinal glia potentially affecting NMDA receptor function in retinal neurons. Displays sodium- and amino acid-dependent but uncoupled channel-like anion conductance with a preference SCN(-) &gt;&gt; NO3(-) &gt; I(-) &gt; Cl(-). Through binding of the fusogenic protein syncytin-1/ERVW-1 may mediate trophoblasts syncytialization, the spontaneous fusion of their plasma membranes, an essential process in placental development. This Mus musculus (Mouse) protein is Neutral amino acid transporter B(0) (Slc1a5).